Reading from the N-terminus, the 118-residue chain is Large ribosomal subunit protein bL20 (118 aa).

This sequence belongs to the bacterial ribosomal protein bL20 family.

Its function is as follows. Binds directly to 23S ribosomal RNA and is necessary for the in vitro assembly process of the 50S ribosomal subunit. It is not involved in the protein synthesizing functions of that subunit. The protein is Large ribosomal subunit protein bL20 of Sulfurimonas denitrificans (strain ATCC 33889 / DSM 1251) (Thiomicrospira denitrificans (strain ATCC 33889 / DSM 1251)).